Here is a 202-residue protein sequence, read N- to C-terminus: uncharacterized protein (202 aa).

A helical membrane pass occupies residues 175 to 195; the sequence is INTGIALFIILTSLLVYFIQF.

The protein localises to the membrane. This is an uncharacterized protein from Dictyostelium discoideum (Social amoeba).